The chain runs to 348 residues: Sex-lethal homolog (348 aa).

2 RRM domains span residues 110–188 (TNLI…YARP) and 196–276 (TNLY…LAEE). Positions 296-310 (GGGGGGGGGGGGGMG) are enriched in gly residues. Residues 296–317 (GGGGGGGGGGGGGMGGPPPPPM) form a disordered region.

It localises to the nucleus. Unknown; apparently not involved in somatic sex determination. This Ceratitis capitata (Mediterranean fruit fly) protein is Sex-lethal homolog (SXL).